The following is a 146-amino-acid chain: MKIMVINGPNLNLLGIREKEIYGAKDFNQVIDYIKEEGKELGLEINCFQSNIEGEIINFIHNAYFKKYDGIIINPGAYTHYSIAIYDALKGVEIPTVEVHLSNIHKREEFRHKSVTAPACIGQISGFGEYGYIMAMNALKKHIKSK.

Y22 (proton acceptor) is an active-site residue. The substrate site is built by N74, H80, and D87. The active-site Proton donor is the H100. Substrate is bound by residues 101–102 and R111; that span reads LS.

The protein belongs to the type-II 3-dehydroquinase family. In terms of assembly, homododecamer.

The catalysed reaction is 3-dehydroquinate = 3-dehydroshikimate + H2O. It participates in metabolic intermediate biosynthesis; chorismate biosynthesis; chorismate from D-erythrose 4-phosphate and phosphoenolpyruvate: step 3/7. Catalyzes a trans-dehydration via an enolate intermediate. The sequence is that of 3-dehydroquinate dehydratase from Clostridium perfringens (strain SM101 / Type A).